Consider the following 763-residue polypeptide: Dual specificity tyrosine-phosphorylation-regulated kinase 1A (763 aa).

Ser-14 is modified (phosphoserine). A disordered region spans residues 32 to 57 (GQMPHSHQYSDRRQPNISDQQVSALS). Residues 46-57 (PNISDQQVSALS) show a composition bias toward polar residues. At Tyr-111 the chain carries Phosphotyrosine; by autocatalysis. The disordered stretch occupies residues 115–136 (KKRRHQQGQGDDSSHKKERKVY). Residues 117–134 (RRHQQGQGDDSSHKKERK) carry the Bipartite nuclear localization signal motif. Residue Tyr-140 is modified to Phosphotyrosine; by autocatalysis. Tyr-145 is modified (phosphotyrosine). Tyr-159 is modified (phosphotyrosine; by autocatalysis). A Protein kinase domain is found at 159–479 (YEIDSLIGKG…PYYALQHSFF (321 aa)). 165 to 173 (IGKGSFGQV) contacts ATP. Tyr-177 carries the post-translational modification Phosphotyrosine; by autocatalysis. Lys-188 contacts ATP. Tyr-219 is modified (phosphotyrosine; by autocatalysis). 238 to 241 (FEML) is a binding site for ATP. Asp-287 serves as the catalytic Proton acceptor. Ser-310 bears the Phosphoserine; by autocatalysis mark. Residues Tyr-319 and Tyr-321 each carry the phosphotyrosine; by autocatalysis modification. Position 402 is a phosphothreonine; by autocatalysis (Thr-402). A disordered region spans residues 408-442 (TKDGKREYKPPGTRKLHNILGVETGGPGGRRAGES). Tyr-449 is subject to Phosphotyrosine; by autocatalysis. Positions 485–501 (EGTNTSNSVSTSPAMEQ) are enriched in polar residues. 3 disordered regions span residues 485–540 (EGTN…HSGG), 596–679 (NALH…GNQA), and 744–763 (DREE…VASS). The segment covering 502–525 (SQSSGTTSSTSSSSGGSSGTSNSG) has biased composition (low complexity). 2 positions are modified to phosphoserine: Ser-529 and Ser-538. A histidine-rich domain (HRD) region spans residues 595–625 (QNALHHHHGNSSHHHHHHHHHHHHHGQQALG). Residues 598 to 620 (LHHHHGNSSHHHHHHHHHHHHHG) are compositionally biased toward basic residues. The span at 634–645 (NSPTNSSSTQDS) shows a compositional bias: polar residues. Over residues 654 to 672 (SMTSLSSSTTSSSTSSSST) the composition is skewed to low complexity. Ser-748 and Ser-758 each carry phosphoserine. Residues 754–763 (CVQQSPVASS) are compositionally biased toward polar residues.

This sequence belongs to the protein kinase superfamily. CMGC Ser/Thr protein kinase family. MNB/DYRK subfamily. As to quaternary structure, interacts with RAD54L2/ARIP4. Interacts with CRY2. Interacts with RANBP9. Interacts with WDR68. Interacts with SIRT1. (Microbial infection) Interacts with human adenovirus 5 E1A protein. In terms of processing, autophosphorylated on numerous tyrosine residues. Can also autophosphorylate on serine and threonine residues (in vitro). In terms of tissue distribution, ubiquitous. Highest levels in skeletal muscle, testis, fetal lung and fetal kidney.

The protein localises to the nucleus. The protein resides in the nucleus speckle. It carries out the reaction L-seryl-[protein] + ATP = O-phospho-L-seryl-[protein] + ADP + H(+). The enzyme catalyses L-threonyl-[protein] + ATP = O-phospho-L-threonyl-[protein] + ADP + H(+). The catalysed reaction is L-tyrosyl-[protein] + ATP = O-phospho-L-tyrosyl-[protein] + ADP + H(+). It catalyses the reaction [DNA-directed RNA polymerase] + ATP = phospho-[DNA-directed RNA polymerase] + ADP + H(+). Its activity is regulated as follows. Inhibited by RANBP9. Inhibited by harmine, leucettamine B and leucettine L41. In terms of biological role, dual-specificity kinase which possesses both serine/threonine and tyrosine kinase activities. Exhibits a substrate preference for proline at position P+1 and arginine at position P-3. Plays an important role in double-strand breaks (DSBs) repair following DNA damage. Mechanistically, phosphorylates RNF169 and increases its ability to block accumulation of TP53BP1 at the DSB sites thereby promoting homologous recombination repair (HRR). Also acts as a positive regulator of transcription by acting as a CTD kinase that mediates phosphorylation of the CTD (C-terminal domain) of the large subunit of RNA polymerase II (RNAP II) POLR2A. May play a role in a signaling pathway regulating nuclear functions of cell proliferation. Modulates alternative splicing by phosphorylating the splice factor SRSF6. Has pro-survival function and negatively regulates the apoptotic process. Promotes cell survival upon genotoxic stress through phosphorylation of SIRT1. This in turn inhibits p53/TP53 activity and apoptosis. Phosphorylates SEPTIN4, SEPTIN5 and SF3B1 at 'Thr-434'. This chain is Dual specificity tyrosine-phosphorylation-regulated kinase 1A, found in Homo sapiens (Human).